Reading from the N-terminus, the 81-residue chain is Costars family protein ABRACL (81 aa).

M1 is modified (N-acetylmethionine).

It belongs to the costars family.

The polypeptide is Costars family protein ABRACL (ABRACL) (Homo sapiens (Human)).